A 357-amino-acid polypeptide reads, in one-letter code: NADH-quinone oxidoreductase subunit H (357 aa).

8 helical membrane-spanning segments follow: residues 20–40 (WLVV…ILCV), 92–112 (ILFI…WAVV), 127–147 (LLYV…AGWA), 165–185 (VSYE…SGSL), 206–226 (FLSW…ISAV), 268–288 (ILLS…PIDI), 294–314 (IPGW…FIWF), and 329–349 (LGWK…AIWM).

It belongs to the complex I subunit 1 family. NDH-1 is composed of 14 different subunits. Subunits NuoA, H, J, K, L, M, N constitute the membrane sector of the complex.

The protein resides in the cell inner membrane. It catalyses the reaction a quinone + NADH + 5 H(+)(in) = a quinol + NAD(+) + 4 H(+)(out). NDH-1 shuttles electrons from NADH, via FMN and iron-sulfur (Fe-S) centers, to quinones in the respiratory chain. The immediate electron acceptor for the enzyme in this species is believed to be ubiquinone. Couples the redox reaction to proton translocation (for every two electrons transferred, four hydrogen ions are translocated across the cytoplasmic membrane), and thus conserves the redox energy in a proton gradient. This subunit may bind ubiquinone. This is NADH-quinone oxidoreductase subunit H from Bordetella avium (strain 197N).